The following is a 46-amino-acid chain: Endochitinase 4 (46 aa).

It belongs to the glycosyl hydrolase 19 family. Chitinase class I subfamily.

The catalysed reaction is Random endo-hydrolysis of N-acetyl-beta-D-glucosaminide (1-&gt;4)-beta-linkages in chitin and chitodextrins.. Defense against chitin-containing fungal and bacterial pathogens. The polypeptide is Endochitinase 4 (Arachis hypogaea (Peanut)).